Reading from the N-terminus, the 403-residue chain is Beta-galactoside alpha-2,6-sialyltransferase 1 (403 aa).

The Cytoplasmic portion of the chain corresponds to 1–9; sequence MIHTNLKRK. A helical; Signal-anchor for type II membrane protein transmembrane segment spans residues 10-26; it reads FSCFVLVFLLFAIICVW. Over 27–403 the chain is Lumenal; it reads KKGSDYEALT…TLSGFRNNRC (377 aa). Disulfide bonds link cysteine 139–cysteine 403, cysteine 181–cysteine 332, and cysteine 350–cysteine 361. Residues asparagine 146 and asparagine 158 are each glycosylated (N-linked (GlcNAc...) asparagine). Substrate is bound by residues serine 186, asparagine 209, asparagine 230, 319–321, cysteine 350, tyrosine 351, threonine 362, tyrosine 366, histidine 367, and lysine 373; that span reads SSG. Tyrosine 366 carries the phosphotyrosine modification.

It belongs to the glycosyltransferase 29 family. Monomer and homodimer. In terms of processing, N-glycosylated.

It is found in the golgi apparatus. It localises to the golgi stack membrane. The protein localises to the secreted. The catalysed reaction is a beta-D-galactoside + CMP-N-acetyl-beta-neuraminate = an N-acetyl-alpha-neuraminyl-(2-&gt;6)-beta-D-galactosyl derivative + CMP + H(+). The protein operates within protein modification; protein glycosylation. Transfers sialic acid from CMP-sialic acid to galactose-containing acceptor substrates. The chain is Beta-galactoside alpha-2,6-sialyltransferase 1 (St6gal1) from Mus musculus (Mouse).